We begin with the raw amino-acid sequence, 59 residues long: UPF0337 protein PP_4561 (59 aa).

Positions 27-43 (TDNEKLRAEGKAQELKG) are enriched in basic and acidic residues. The segment at 27–59 (TDNEKLRAEGKAQELKGEAQQVKGNVKDAVKKP) is disordered.

It belongs to the UPF0337 (CsbD) family.

In Pseudomonas putida (strain ATCC 47054 / DSM 6125 / CFBP 8728 / NCIMB 11950 / KT2440), this protein is UPF0337 protein PP_4561.